Consider the following 826-residue polypeptide: Prominin-1-A (826 aa).

Helical transmembrane passes span 50–70 (YYEP…LFVV), 106–126 (VVCA…GLLF), and 153–173 (LLTT…LCAY). N-linked (GlcNAc...) asparagine glycosylation is found at N178, N268, N286, N327, N388, and N404. 2 helical membrane passes run 439–459 (CMIV…ILGF) and 483–503 (VGFS…LFLA). N-linked (GlcNAc...) asparagine glycans are attached at residues N576, N582, N617, and N693.

This sequence belongs to the prominin family.

It is found in the apical cell membrane. Its subcellular location is the cell projection. The protein localises to the microvillus membrane. It localises to the endoplasmic reticulum. The protein resides in the endoplasmic reticulum-Golgi intermediate compartment. Functionally, may play a role in cell differentiation, proliferation and apoptosis. Binds cholesterol in cholesterol-containing plasma membrane microdomains and may play a role in the organization of the apical plasma membrane in epithelial cells. Involved in regulation of MAPK and Akt signaling pathways. The polypeptide is Prominin-1-A (prom1a) (Danio rerio (Zebrafish)).